Consider the following 483-residue polypeptide: Regulatory protein ViaA (483 aa).

It belongs to the ViaA family. In terms of assembly, homodimer. Interacts with RavA.

The protein localises to the cytoplasm. Functionally, component of the RavA-ViaA chaperone complex, which may act on the membrane to optimize the function of some of the respiratory chains. ViaA stimulates the ATPase activity of RavA. The sequence is that of Regulatory protein ViaA from Salmonella dublin (strain CT_02021853).